The following is a 494-amino-acid chain: Aspartyl/glutamyl-tRNA(Asn/Gln) amidotransferase subunit B (494 aa).

The segment at 475–494 is disordered; it reads TSGRADPKATNQMLAKKLKG.

Belongs to the GatB/GatE family. GatB subfamily. In terms of assembly, heterotrimer of A, B and C subunits.

It carries out the reaction L-glutamyl-tRNA(Gln) + L-glutamine + ATP + H2O = L-glutaminyl-tRNA(Gln) + L-glutamate + ADP + phosphate + H(+). It catalyses the reaction L-aspartyl-tRNA(Asn) + L-glutamine + ATP + H2O = L-asparaginyl-tRNA(Asn) + L-glutamate + ADP + phosphate + 2 H(+). Its function is as follows. Allows the formation of correctly charged Asn-tRNA(Asn) or Gln-tRNA(Gln) through the transamidation of misacylated Asp-tRNA(Asn) or Glu-tRNA(Gln) in organisms which lack either or both of asparaginyl-tRNA or glutaminyl-tRNA synthetases. The reaction takes place in the presence of glutamine and ATP through an activated phospho-Asp-tRNA(Asn) or phospho-Glu-tRNA(Gln). This Acaryochloris marina (strain MBIC 11017) protein is Aspartyl/glutamyl-tRNA(Asn/Gln) amidotransferase subunit B.